The primary structure comprises 535 residues: Ribonuclease Y (535 aa).

The helical transmembrane segment at 30–50 (IWALPALVIGLAIGAGIGILI) threads the bilayer. The region spanning 225–285 (TVSTVALPSE…VRREVARLAL (61 aa)) is the KH domain. The HD domain maps to 351 to 444 (VLQHSLECAL…VQAVDAISGG (94 aa)).

The protein belongs to the RNase Y family.

The protein localises to the cell membrane. Functionally, endoribonuclease that initiates mRNA decay. The protein is Ribonuclease Y of Roseiflexus sp. (strain RS-1).